The following is a 450-amino-acid chain: tRNA-2-methylthio-N(6)-dimethylallyladenosine synthase (450 aa).

The 121-residue stretch at 8 to 128 folds into the MTTase N-terminal domain; that stretch reads KRLYIKTYGC…LPELIARAHR (121 aa). The [4Fe-4S] cluster site is built by Cys17, Cys53, Cys91, Cys166, Cys170, and Cys173. The Radical SAM core domain maps to 152 to 382; that stretch reads RPTGVTAFLT…QALLEQQQLA (231 aa). The TRAM domain occupies 385-447; it reads AAQAGRVLPV…RNSLAGVLEL (63 aa).

It belongs to the methylthiotransferase family. MiaB subfamily. Monomer. It depends on [4Fe-4S] cluster as a cofactor.

Its subcellular location is the cytoplasm. The catalysed reaction is N(6)-dimethylallyladenosine(37) in tRNA + (sulfur carrier)-SH + AH2 + 2 S-adenosyl-L-methionine = 2-methylsulfanyl-N(6)-dimethylallyladenosine(37) in tRNA + (sulfur carrier)-H + 5'-deoxyadenosine + L-methionine + A + S-adenosyl-L-homocysteine + 2 H(+). Functionally, catalyzes the methylthiolation of N6-(dimethylallyl)adenosine (i(6)A), leading to the formation of 2-methylthio-N6-(dimethylallyl)adenosine (ms(2)i(6)A) at position 37 in tRNAs that read codons beginning with uridine. The sequence is that of tRNA-2-methylthio-N(6)-dimethylallyladenosine synthase from Phenylobacterium zucineum (strain HLK1).